The sequence spans 20 residues: Octopamine receptor (20 aa).

It belongs to the G-protein coupled receptor 1 family.

Its subcellular location is the cell membrane. Functionally, putative receptor for octopamine. Octopamine (OA) is a neurotransmitter, neurohormone, and neuromodulator in invertebrates. The activity of this receptor is mediated by G proteins which activate adenylyl cyclase. The protein is Octopamine receptor of Photinus pyralis (Common eastern firefly).